Here is a 588-residue protein sequence, read N- to C-terminus: Cyclin-dependent kinase 8 (588 aa).

The Protein kinase domain maps to 26–348 (FENSKEIGRG…CEEAMNDIYF (323 aa)). Residues 32 to 40 (IGRGTYGLV) and K60 contribute to the ATP site. The Proton acceptor role is filled by D158. 3 disordered regions span residues 376–426 (MTVA…GAHP), 510–529 (PGPS…AVPG), and 546–588 (MRAP…QYHR). Over residues 382 to 426 (QAQQQHQQQQVQMQQQPQMGQQQMMGQPQMVQPQMGQPPMGGAHP) the composition is skewed to low complexity. Residues 557–588 (MPGRGMAPPQMGQQQPGPNQQQQQQWQQQYHR) are compositionally biased toward low complexity.

It belongs to the protein kinase superfamily. CMGC Ser/Thr protein kinase family. CDC2/CDKX subfamily. In terms of assembly, component of the Mediator complex. Requires Mg(2+) as cofactor.

The protein resides in the nucleus. It catalyses the reaction L-seryl-[protein] + ATP = O-phospho-L-seryl-[protein] + ADP + H(+). The catalysed reaction is L-threonyl-[protein] + ATP = O-phospho-L-threonyl-[protein] + ADP + H(+). It carries out the reaction [DNA-directed RNA polymerase] + ATP = phospho-[DNA-directed RNA polymerase] + ADP + H(+). Its function is as follows. Component of the Mediator complex, a coactivator involved in regulated gene transcription of nearly all RNA polymerase II-dependent genes. Mediator functions as a bridge to convey information from gene-specific regulatory proteins to the basal RNA polymerase II transcription machinery. Mediator is recruited to promoters by direct interactions with regulatory proteins and serves as a scaffold for the assembly of a functional pre-initiation complex with RNA polymerase II and the general transcription factors. Phosphorylates the CTD (C-terminal domain) of the large subunit of RNA polymerase II (RNAp II), which may inhibit the formation of a transcription initiation complex. This is Cyclin-dependent kinase 8 (cdk-8) from Caenorhabditis elegans.